A 436-amino-acid polypeptide reads, in one-letter code: D-amino acid dehydrogenase (436 aa).

3–17 is an FAD binding site; sequence IVVLGAGVVGVTSAY.

Belongs to the DadA oxidoreductase family. FAD is required as a cofactor.

The enzyme catalyses a D-alpha-amino acid + A + H2O = a 2-oxocarboxylate + AH2 + NH4(+). It participates in amino-acid degradation; D-alanine degradation; NH(3) and pyruvate from D-alanine: step 1/1. Oxidative deamination of D-amino acids. This is D-amino acid dehydrogenase from Cereibacter sphaeroides (strain ATCC 17023 / DSM 158 / JCM 6121 / CCUG 31486 / LMG 2827 / NBRC 12203 / NCIMB 8253 / ATH 2.4.1.) (Rhodobacter sphaeroides).